The sequence spans 464 residues: tRNA modification GTPase MnmE (464 aa).

Residues Arg-25, Glu-87, and Lys-130 each coordinate (6S)-5-formyl-5,6,7,8-tetrahydrofolate. Residues 226-386 enclose the TrmE-type G domain; sequence GLSVVLAGQP…LRAELLRIAG (161 aa). Residue Asn-236 coordinates K(+). GTP is bound by residues 236–241, 255–261, and 280–283; these read NVGKSS, TPIAGTT, and DTAG. Position 240 (Ser-240) interacts with Mg(2+). Thr-255, Ile-257, and Thr-260 together coordinate K(+). Position 261 (Thr-261) interacts with Mg(2+). A (6S)-5-formyl-5,6,7,8-tetrahydrofolate-binding site is contributed by Lys-464.

The protein belongs to the TRAFAC class TrmE-Era-EngA-EngB-Septin-like GTPase superfamily. TrmE GTPase family. In terms of assembly, homodimer. Heterotetramer of two MnmE and two MnmG subunits. K(+) is required as a cofactor.

It is found in the cytoplasm. Functionally, exhibits a very high intrinsic GTPase hydrolysis rate. Involved in the addition of a carboxymethylaminomethyl (cmnm) group at the wobble position (U34) of certain tRNAs, forming tRNA-cmnm(5)s(2)U34. This is tRNA modification GTPase MnmE from Burkholderia ambifaria (strain ATCC BAA-244 / DSM 16087 / CCUG 44356 / LMG 19182 / AMMD) (Burkholderia cepacia (strain AMMD)).